The following is a 783-amino-acid chain: uncharacterized protein (783 aa).

The disordered stretch occupies residues 1-22 (MVNTRGYTTLPNVEEPANNSQD). Topologically, residues 1 to 109 (MVNTRGYTTL…SKIGNVMVMR (109 aa)) are cytoplasmic. Residues 110 to 127 (RIFYIMMMSIIAALIIAS) form a helical; Signal-anchor for type II membrane protein membrane-spanning segment. Over 128-783 (DRLPNGKARG…NLHGINTNEF (656 aa)) the chain is Extracellular. Residues Asn139 and Asn213 are each glycosylated (N-linked (GlcNAc...) asparagine). The region spanning 241–333 (HNGQLNNIPV…GTGDALTPEW (93 aa)) is the PA domain. Asn529 carries N-linked (GlcNAc...) asparagine glycosylation.

Its subcellular location is the cell membrane. This is an uncharacterized protein from Saccharomyces cerevisiae (strain ATCC 204508 / S288c) (Baker's yeast).